Reading from the N-terminus, the 220-residue chain is Adapter protein MecA (220 aa).

It belongs to the MecA family. As to quaternary structure, homodimer.

Enables the recognition and targeting of unfolded and aggregated proteins to the ClpC protease or to other proteins involved in proteolysis. This Enterococcus faecalis (strain ATCC 700802 / V583) protein is Adapter protein MecA.